Consider the following 1328-residue polypeptide: DNA-directed RNA polymerase subunit beta (1328 aa).

This sequence belongs to the RNA polymerase beta chain family. The RNAP catalytic core consists of 2 alpha, 1 beta, 1 beta' and 1 omega subunit. When a sigma factor is associated with the core the holoenzyme is formed, which can initiate transcription.

It carries out the reaction RNA(n) + a ribonucleoside 5'-triphosphate = RNA(n+1) + diphosphate. Its function is as follows. DNA-dependent RNA polymerase catalyzes the transcription of DNA into RNA using the four ribonucleoside triphosphates as substrates. The sequence is that of DNA-directed RNA polymerase subunit beta from Karelsulcia muelleri (strain GWSS) (Sulcia muelleri).